The chain runs to 152 residues: Nucleoside diphosphate kinase A 1 (152 aa).

ATP is bound by residues lysine 12, phenylalanine 60, arginine 88, threonine 94, arginine 105, and asparagine 115. Residue histidine 118 is the Pros-phosphohistidine intermediate of the active site.

This sequence belongs to the NDK family. As to quaternary structure, homohexamer. Requires Mg(2+) as cofactor. Post-translationally, the N-terminus is blocked.

Its subcellular location is the cytoplasm. It is found in the cell membrane. The protein resides in the nucleus. It catalyses the reaction a 2'-deoxyribonucleoside 5'-diphosphate + ATP = a 2'-deoxyribonucleoside 5'-triphosphate + ADP. It carries out the reaction a ribonucleoside 5'-diphosphate + ATP = a ribonucleoside 5'-triphosphate + ADP. Its activity is regulated as follows. Autophosphorylation at His-118 increases serine/threonine protein kinase activity of the enzyme. Interaction with the SET complex inhibits exonuclease activity. Functionally, major role in the synthesis of nucleoside triphosphates other than ATP. Possesses nucleoside-diphosphate kinase, serine/threonine-specific protein kinase, geranyl and farnesyl pyrophosphate kinase, histidine protein kinase and 3'-5' exonuclease activities. Involved in cell proliferation, differentiation and development, signal transduction, G protein-coupled receptor endocytosis, and gene expression. Required for neural development including neural patterning and cell fate determination. This is Nucleoside diphosphate kinase A 1 (NME1-1) from Bos taurus (Bovine).